Reading from the N-terminus, the 339-residue chain is tRNA(Ile)-lysidine synthase (339 aa).

34-39 (SGGPDS) is a binding site for ATP.

Belongs to the tRNA(Ile)-lysidine synthase family.

The protein resides in the cytoplasm. It carries out the reaction cytidine(34) in tRNA(Ile2) + L-lysine + ATP = lysidine(34) in tRNA(Ile2) + AMP + diphosphate + H(+). Ligates lysine onto the cytidine present at position 34 of the AUA codon-specific tRNA(Ile) that contains the anticodon CAU, in an ATP-dependent manner. Cytidine is converted to lysidine, thus changing the amino acid specificity of the tRNA from methionine to isoleucine. The chain is tRNA(Ile)-lysidine synthase from Methylobacterium nodulans (strain LMG 21967 / CNCM I-2342 / ORS 2060).